We begin with the raw amino-acid sequence, 436 residues long: Tol-Pal system protein TolB (436 aa).

An N-terminal signal peptide occupies residues 1-28 (MMKCSFFRAILVAVGLMAAAVVATPANA).

This sequence belongs to the TolB family. In terms of assembly, the Tol-Pal system is composed of five core proteins: the inner membrane proteins TolA, TolQ and TolR, the periplasmic protein TolB and the outer membrane protein Pal. They form a network linking the inner and outer membranes and the peptidoglycan layer.

Its subcellular location is the periplasm. In terms of biological role, part of the Tol-Pal system, which plays a role in outer membrane invagination during cell division and is important for maintaining outer membrane integrity. The protein is Tol-Pal system protein TolB of Rhizobium etli (strain CIAT 652).